Reading from the N-terminus, the 326-residue chain is MNSESREDMAINSIKLLAGNSHPDLAEQISKKLGIPLSKVGVYQYSNKETSVTIGESLRDEDVYIIQTGIGEQEINDFLMELLILIHACKIASARKITTVIPNFPYARQDKKDKSRAPITAKLVANLLQTAGADHVITMDLHASQIQGFFHIPVDNLYAEPSVLNYIRTKTDFDNAILVSPDAGGAKRVAALADKLDLNFALIHKERQKANEVSKMVLVGDVTNKSCLLVDDMADTCGTLVKACDTLMEHGAKEVIAIVTHGIFSGSAREKLRNSRLSRIVCTNTVPVDLDLPIADQIDISPTFAEAIRRLHNGESVSYLFTHAPV.

Residues D140, H142, H151, and D155 each coordinate Mg(2+).

Belongs to the ribose-phosphate pyrophosphokinase family.

The protein resides in the cytoplasm. It carries out the reaction D-ribose 5-phosphate + ATP = 5-phospho-alpha-D-ribose 1-diphosphate + AMP + H(+). Its pathway is metabolic intermediate biosynthesis; 5-phospho-alpha-D-ribose 1-diphosphate biosynthesis; 5-phospho-alpha-D-ribose 1-diphosphate from D-ribose 5-phosphate (route I): step 1/1. 5-phosphoribose 1-diphosphate synthase involved in nucleotide, histidine, and tryptophan biosynthesis. Active in heteromultimeric complexes with other 5-phosphoribose 1-diphosphate synthases (PRS2, PRS3, PRS4 and PRS5). The polypeptide is Ribose-phosphate pyrophosphokinase 4 (PRS4) (Saccharomyces cerevisiae (strain ATCC 204508 / S288c) (Baker's yeast)).